The following is an 86-amino-acid chain: Putative sodium channel toxin Ts17 (86 aa).

An N-terminal signal peptide occupies residues 1 to 19 (MNYFIFLVVACLLTAGTEG). The 62-residue stretch at 21–82 (KDGYPVEGDN…EPTKTSGRCK (62 aa)) folds into the LCN-type CS-alpha/beta domain. Cystine bridges form between cysteine 31/cysteine 81, cysteine 35/cysteine 57, cysteine 43/cysteine 64, and cysteine 47/cysteine 66. Proline 83 bears the Proline amide mark.

Belongs to the long (4 C-C) scorpion toxin superfamily. Sodium channel inhibitor family. Alpha subfamily. Expressed by the venom gland.

It is found in the secreted. In terms of biological role, alpha toxins bind voltage-independently at site-3 of sodium channels (Nav) and inhibit the inactivation of the activated channels, thereby blocking neuronal transmission. This chain is Putative sodium channel toxin Ts17, found in Tityus serrulatus (Brazilian scorpion).